The sequence spans 603 residues: Myotubularin (603 aa).

Residues 1 to 13 (MASASTSKYNSHS) are compositionally biased toward polar residues. Positions 1 to 25 (MASASTSKYNSHSLENESIKRTSRD) are disordered. Phosphoserine occurs at positions 13 and 18. The segment covering 14 to 25 (LENESIKRTSRD) has biased composition (basic and acidic residues). The GRAM domain maps to 29–97 (RDLTEAVPRL…GVISRIEKMG (69 aa)). The 376-residue stretch at 163–538 (GWTVYNPVEE…RHLELWVNYY (376 aa)) folds into the Myotubularin phosphatase domain. A 1,2-diacyl-sn-glycero-3-phospho-(1D-myo-inositol-3,5-bisphosphate)-binding residues include asparagine 288, asparagine 313, and isoleucine 314. Positions 288, 313, and 314 each coordinate a 1,2-diacyl-sn-glycero-3-phospho-(1D-myo-inositol-3-phosphate). The Phosphocysteine intermediate role is filled by cysteine 375. Positions 376, 377, 378, 379, 380, 381, 417, and 421 each coordinate a 1,2-diacyl-sn-glycero-3-phospho-(1D-myo-inositol-3,5-bisphosphate). A 1,2-diacyl-sn-glycero-3-phospho-(1D-myo-inositol-3-phosphate) contacts are provided by serine 376, aspartate 377, glycine 378, tryptophan 379, aspartate 380, and arginine 381. Arginine 421 contacts a 1,2-diacyl-sn-glycero-3-phospho-(1D-myo-inositol-3-phosphate). Residue threonine 495 is modified to Phosphothreonine. A disordered region spans residues 579–603 (SAKLSDPPTSPSSPSQMMPHVQTHF). Serine 588 carries the post-translational modification Phosphoserine.

It belongs to the protein-tyrosine phosphatase family. Non-receptor class myotubularin subfamily. In terms of assembly, heterodimer with MTMR12. Interacts with KMT2A/MLL1 (via SET domain). Interacts with DES in skeletal muscle but not in cardiac muscle. Interacts with SPEG.

It localises to the cytoplasm. It is found in the cell membrane. Its subcellular location is the cell projection. The protein resides in the filopodium. The protein localises to the ruffle. It localises to the late endosome. It is found in the myofibril. Its subcellular location is the sarcomere. The enzyme catalyses a 1,2-diacyl-sn-glycero-3-phospho-(1D-myo-inositol-3-phosphate) + H2O = a 1,2-diacyl-sn-glycero-3-phospho-(1D-myo-inositol) + phosphate. It catalyses the reaction a 1,2-diacyl-sn-glycero-3-phospho-(1D-myo-inositol-3,5-bisphosphate) + H2O = a 1,2-diacyl-sn-glycero-3-phospho-(1D-myo-inositol-5-phosphate) + phosphate. The catalysed reaction is 1,2-dioctanoyl-sn-glycero-3-phospho-(1-D-myo-inositol-3-phosphate) + H2O = 1,2-dioctanoyl-sn-glycero-3-phospho-(1D-myo-inositol) + phosphate. It carries out the reaction 1,2-dioctanoyl-sn-glycero-3-phospho-(1D-myo-inositol-3,5-bisphosphate) + H2O = 1,2-dioctanoyl-sn-glycero-3-phospho-(1D-myo-inositol-5-phosphate) + phosphate. The enzyme catalyses 1,2-dihexadecanoyl-sn-glycero-3-phospho-(1D-myo-inositol-3,5-phosphate) + H2O = 1,2-dihexadecanoyl-sn-glycero-3-phospho-(1D-myo-inositol-5-phosphate) + phosphate. With respect to regulation, allosterically activated by phosphatidylinositol 5-phosphate (PI5P). Functionally, lipid phosphatase which dephosphorylates phosphatidylinositol 3-monophosphate (PI3P) and phosphatidylinositol 3,5-bisphosphate (PI(3,5)P2). Has also been shown to dephosphorylate phosphotyrosine- and phosphoserine-containing peptides. Negatively regulates EGFR degradation through regulation of EGFR trafficking from the late endosome to the lysosome. Plays a role in vacuolar formation and morphology. Regulates desmin intermediate filament assembly and architecture. Plays a role in mitochondrial morphology and positioning. Required for skeletal muscle maintenance but not for myogenesis. In skeletal muscles, stabilizes MTMR12 protein levels. The chain is Myotubularin from Pongo abelii (Sumatran orangutan).